The following is an 88-amino-acid chain: Small ribosomal subunit protein bS20 (88 aa).

Residues 1–27 (MANIPSAKKRARQAEKRRKHNQSQRSM) form a disordered region. The span at 7–22 (AKKRARQAEKRRKHNQ) shows a compositional bias: basic residues.

This sequence belongs to the bacterial ribosomal protein bS20 family.

In terms of biological role, binds directly to 16S ribosomal RNA. This chain is Small ribosomal subunit protein bS20, found in Alkalilimnicola ehrlichii (strain ATCC BAA-1101 / DSM 17681 / MLHE-1).